Consider the following 346-residue polypeptide: Glycerol-3-phosphate dehydrogenase [NAD(P)+] (346 aa).

The NADPH site is built by S15, W16, R36, and K110. The sn-glycerol 3-phosphate site is built by K110, G139, and S141. A143 contributes to the NADPH binding site. Sn-glycerol 3-phosphate-binding residues include K194, D247, S257, R258, and N259. The active-site Proton acceptor is the K194. R258 provides a ligand contact to NADPH. Residues V282 and E284 each coordinate NADPH.

The protein belongs to the NAD-dependent glycerol-3-phosphate dehydrogenase family.

The protein resides in the cytoplasm. The enzyme catalyses sn-glycerol 3-phosphate + NAD(+) = dihydroxyacetone phosphate + NADH + H(+). The catalysed reaction is sn-glycerol 3-phosphate + NADP(+) = dihydroxyacetone phosphate + NADPH + H(+). Its pathway is membrane lipid metabolism; glycerophospholipid metabolism. Its function is as follows. Catalyzes the reduction of the glycolytic intermediate dihydroxyacetone phosphate (DHAP) to sn-glycerol 3-phosphate (G3P), the key precursor for phospholipid synthesis. The sequence is that of Glycerol-3-phosphate dehydrogenase [NAD(P)+] from Xylella fastidiosa (strain Temecula1 / ATCC 700964).